The following is a 160-amino-acid chain: Cytochrome b6-f complex subunit 4 (160 aa).

3 helical membrane-spanning segments follow: residues 36-56, 95-115, and 128-148; these read LLYIFPVVILGTIACVVGLAV, LLGIALQTLIPLGLMILPFIE, and IAMSLFLFGTFLTIYLGIGAC.

Belongs to the cytochrome b family. PetD subfamily. As to quaternary structure, the 4 large subunits of the cytochrome b6-f complex are cytochrome b6, subunit IV (17 kDa polypeptide, PetD), cytochrome f and the Rieske protein, while the 4 small subunits are PetG, PetL, PetM and PetN. The complex functions as a dimer.

It is found in the cellular thylakoid membrane. Component of the cytochrome b6-f complex, which mediates electron transfer between photosystem II (PSII) and photosystem I (PSI), cyclic electron flow around PSI, and state transitions. This Prochlorococcus marinus (strain MIT 9312) protein is Cytochrome b6-f complex subunit 4.